The sequence spans 314 residues: CBASS oligonucleotide cyclase CdnC (314 aa).

Lys60 provides a ligand contact to ATP. The Mg(2+) site is built by Asp73 and Asp75. Residues Asp75, Lys186, Lys197–Phe199, and Asn263 contribute to the ATP site.

The protein belongs to the CD-NTase family. C01 subfamily. As to quaternary structure, forms complexes with Cap7 with 1:1 and 2:2 stoichimetry, and a 1:1:6 CdnC:Cap7:Cap6 complex. The cofactor is Mg(2+).

Functionally, cyclic nucleotide synthase (second messenger synthase) of a CBASS antivirus system. CBASS (cyclic oligonucleotide-based antiphage signaling system) provides immunity against bacteriophage. The CD-NTase protein synthesizes cyclic nucleotides in response to infection; these serve as specific second messenger signals. The signals activate a diverse range of effectors, leading to bacterial cell death and thus abortive phage infection. A type III CBASS system. Expression of this CBASS system (Cap18-Cap6-Cap7-CdnC-CapW-Cap17) in a susceptible E.coli (strain MG1655) confers resistance to bacteriophage P1. Probable cyclic nucleotide synthase that upon activation catalyzes the synthesis of a cyclic nucleotide. A cyclase activity for this enzyme was not identified in. The sequence is that of CBASS oligonucleotide cyclase CdnC from Escherichia coli (strain KTE188).